Here is a 372-residue protein sequence, read N- to C-terminus: L-selectin (372 aa).

Residues 1 to 28 (MIFPWKCQSTQRDLWNIFKLWGWTMLCC) form the signal peptide. Positions 29-38 (DFLAHHGTDC) are excised as a propeptide. Over 39 to 332 (WTYHYSEKPM…FSMIKEGDYN (294 aa)) the chain is Extracellular. In terms of domain architecture, C-type lectin spans 55–155 (RFCRDNYTDL…ACHKLKAALC (101 aa)). 9 cysteine pairs are disulfide-bonded: Cys57/Cys155, Cys128/Cys147, Cys160/Cys171, Cys165/Cys180, Cys182/Cys191, Cys197/Cys241, Cys227/Cys254, Cys259/Cys303, and Cys289/Cys316. N-linked (GlcNAc...) asparagine glycans are attached at residues Asn60 and Asn104. Residues Glu118, Asn120, Glu126, Asn143, and Asp144 each contribute to the Ca(2+) site. The 37-residue stretch at 156 to 192 (YTASCQPWSCSGHGECVEIINNYTCNCDVGYYGPQCQ) folds into the EGF-like domain. Asn177 carries N-linked (GlcNAc...) asparagine glycosylation. Sushi domains lie at 195-256 (IQCE…TCQV) and 257-318 (IQCE…ICQK). Asn232, Asn246, and Asn271 each carry an N-linked (GlcNAc...) asparagine glycan. A helical transmembrane segment spans residues 333-355 (PLFIPVAVMVTAFSGLAFIIWLA). Residues 356-372 (RRLKKGKKSKRSMNDPY) are Cytoplasmic-facing.

The protein belongs to the selectin/LECAM family. Interaction with SELPLG/PSGL1 and PODXL2 is required for promoting recruitment and rolling of leukocytes. This interaction is dependent on the sialyl Lewis X glycan modification of SELPLG and PODXL2, and tyrosine sulfation modifications of SELPLG. Sulfation on 'Tyr-51' of SELPLG is important for L-selectin binding. Post-translationally, N-glycosylated. As to expression, expressed in B-cell lines and T-lymphocytes.

It localises to the cell membrane. Calcium-dependent lectin that mediates cell adhesion by binding to glycoproteins on neighboring cells. Mediates the adherence of lymphocytes to endothelial cells of high endothelial venules in peripheral lymph nodes. Promotes initial tethering and rolling of leukocytes in endothelia. In Homo sapiens (Human), this protein is L-selectin (SELL).